Here is a 366-residue protein sequence, read N- to C-terminus: Alanine racemase (366 aa).

The active-site Proton acceptor; specific for D-alanine is the K33. K33 is subject to N6-(pyridoxal phosphate)lysine. Residue R129 coordinates substrate. Residue Y253 is the Proton acceptor; specific for L-alanine of the active site. Substrate is bound at residue M301.

It belongs to the alanine racemase family. It depends on pyridoxal 5'-phosphate as a cofactor.

It carries out the reaction L-alanine = D-alanine. The protein operates within amino-acid biosynthesis; D-alanine biosynthesis; D-alanine from L-alanine: step 1/1. Catalyzes the interconversion of L-alanine and D-alanine. May also act on other amino acids. In Xanthomonas oryzae pv. oryzae (strain MAFF 311018), this protein is Alanine racemase (alr).